Here is a 529-residue protein sequence, read N- to C-terminus: Phospholipase A1-Igamma2, chloroplastic (529 aa).

A chloroplast-targeting transit peptide spans 1–43 (MAAIPSHNNLLTINHKNSITGSSSLNTNFSEINFPAKFRVATR). Positions 316–320 (GHSLG) match the GXSXG motif. Serine 318 serves as the catalytic Acyl-ester intermediate. Residues aspartate 381 and histidine 437 each act as charge relay system in the active site.

The protein belongs to the AB hydrolase superfamily. Lipase family. Interacts with SBP1. Widely expressed. Highly expressed in leaves and stems.

Its subcellular location is the plastid. It localises to the chloroplast. The catalysed reaction is 1,2-dihexadecanoyl-sn-glycero-3-phosphocholine + H2O = 2-hexadecanoyl-sn-glycero-3-phosphocholine + hexadecanoate + H(+). It catalyses the reaction a 1,2-diacyl-3-O-(beta-D-galactosyl)-sn-glycerol + H2O = an acyl-3-O-(beta-D-galactosyl)-sn-glycerol + a fatty acid + H(+). The enzyme catalyses a 1,2-diacyl-3-O-[alpha-D-galactosyl-(1-&gt;6)-beta-D-galactosyl]-sn-glycerol + H2O = acyl-3-O-[alpha-D-galactosyl-(1-&gt;6)-beta-D-galactosyl]-sn-glycerol + a fatty acid + H(+). It carries out the reaction a triacylglycerol + H2O = a diacylglycerol + a fatty acid + H(+). Acylhydrolase with broad specificity. Catalyzes the hydrolysis of phosphatidylcholine at the sn-1 position. Possesses moderate activity toward phosphatidylcholine (PC), monogalactosyldiacylglycerol (MGDG), digalactosyldiacylglycerol (DGDG) and triacylglycerol (TAG). This Arabidopsis thaliana (Mouse-ear cress) protein is Phospholipase A1-Igamma2, chloroplastic.